We begin with the raw amino-acid sequence, 346 residues long: Phenylalanine--tRNA ligase alpha subunit (346 aa).

Position 262 (E262) interacts with Mg(2+).

Belongs to the class-II aminoacyl-tRNA synthetase family. Phe-tRNA synthetase alpha subunit type 1 subfamily. In terms of assembly, tetramer of two alpha and two beta subunits. It depends on Mg(2+) as a cofactor.

It localises to the cytoplasm. It catalyses the reaction tRNA(Phe) + L-phenylalanine + ATP = L-phenylalanyl-tRNA(Phe) + AMP + diphosphate + H(+). This is Phenylalanine--tRNA ligase alpha subunit from Ehrlichia chaffeensis (strain ATCC CRL-10679 / Arkansas).